Here is a 329-residue protein sequence, read N- to C-terminus: tRNA-modifying protein YgfZ (329 aa).

Folate contacts are provided by tryptophan 27 and tryptophan 189.

It belongs to the tRNA-modifying YgfZ family.

It is found in the cytoplasm. In terms of biological role, folate-binding protein involved in regulating the level of ATP-DnaA and in the modification of some tRNAs. It is probably a key factor in regulatory networks that act via tRNA modification, such as initiation of chromosomal replication. The chain is tRNA-modifying protein YgfZ from Cronobacter sakazakii (strain ATCC BAA-894) (Enterobacter sakazakii).